Here is a 161-residue protein sequence, read N- to C-terminus: Cystatin cpi-2 (161 aa).

An N-terminal signal peptide occupies residues 1-25 (MMSTMSIKEGLLVILLSLFLFDTTA). The Important for interaction with host LGMN motif lies at 76–78 (SND). N-linked (GlcNAc...) asparagine glycosylation is present at N89. The Secondary area of contact motif lies at 93–97 (QVVAG). A disulfide bridge links C111 with C124.

The protein belongs to the cystatin family.

Functionally, cysteine protease inhibitor which inhibits members of the peptidase C1 family. Also acts as an asparaginyl endopeptidase inhibitor. In the human host, inhibits CTSL/cathepsin L, CTSS/cathepsin S, CTSB/cathepsin B and asparaginyl endopeptidase LGMN/AEP which may cause defects in both antigen and MHC class II invariant chain CD74/Ii processing. This chain is Cystatin cpi-2, found in Brugia malayi (Filarial nematode worm).